The following is a 28-amino-acid chain: Putative antitoxin AF_1079 (28 aa).

It belongs to the UPF0165 family.

Functionally, possibly the antitoxin component of a type II toxin-antitoxin (TA) system. This chain is Putative antitoxin AF_1079, found in Archaeoglobus fulgidus (strain ATCC 49558 / DSM 4304 / JCM 9628 / NBRC 100126 / VC-16).